Consider the following 291-residue polypeptide: F-box protein PP2-A12 (291 aa).

The F-box domain occupies 25–71 (KPGLGDLPEACVAIIVENLDPVEICRFSKLNRAFRGASWADCVWESK).

This is F-box protein PP2-A12 (P2A12) from Arabidopsis thaliana (Mouse-ear cress).